Here is a 2647-residue protein sequence, read N- to C-terminus: MSSSHSRCGQSAAVASPGGSIDSRDAEMPATEKDLAEDAPWKKIQQNTFTRWCNEHLKCVSKRIANLQTDLSDGLRLIALLEVLSQKKMHRKHNQRPTFRQMQLENVSVALEFLDRESIKLVSIDSKAIVDGNLKLILGLIWTLILHYSISMPMWDEEEDEEAKKQTPKQRLLGWIQNKLPQLPITNFSRDWQSGRALGALVDSCAPGLCPDWDSWDASKPVNNAREAMQQADDWLGIPQVITPEEIVDPNVDEHSVMTYLSQFPKAKLKPGAPLRPKLNPKKARAYGPGIEPTGNMVKKRAEFTVETRSAGQGEVLVYVEDPAGHQEEAKVTANNDKNRTFSVWYVPEVTGTHKVTVLFAGQHIAKSPFEVYVDKSQGDASKVTAQGPGLEPSGNIANKTTYFEIFTAGAGMGEVEVVIQDPTGQKGTVEPQLEARGDSTYRCSYQPTMEGVHTVHVTFAGVPIPRSPYTVTVGQACNPAACRAIGRGLQPKGVRVKETADFKVYTKGAGSGELKVTVKGPKGEERVKQKDLGDGVYGFEYYPTIPGTYTVTITWGGQNIGRSPFEVKVGTECGNQKVRAWGPGLEGGIVGKSADFVVEAIGDDVGTLGFSVEGPSQAKIECDDKGDGSCDVRYWPQEAGEYAVHVLCNSEDIRLSPFMADIREAPQDFHPDRVKARGPGLEKTGVAVNKPAEFTVDAKHAGKAPLRVQVQDNEGCSVEATVKDNGNGTYSCSYVPRKPVKHTAMVSWGGVSIPNSPFRVNVGAGSHPNKVKVYGPGVAKTGLKAHEPTYFTVDCTEAGQGDVSIGIKCAPGVVGPTEADIDFDIIRNDNDTFTVKYTPCGAGSYTIMVLFADQATPTSPIRVKVEPSHDASKVKAEGPGLNRTGVELGKPTHFTVNAKTAGKGKLDVQFSGLAKGDAVRDVDIIDHHDNTYTVKYIPVQQGPVGVNVTYGGDHIPKSPFSVGVSPSLDLSKIKVSGLGDKVDVGKDQEFTVKSKGAGGQGKVASKIVSPSGAAVPCKVEPGLGADNSVVRFVPREEGPYEVEVTYDGVPVPGSPFPLEAVAPTKPSKVKAFGPGLQGGNAGSPARFTIDTKGAGTGGLGLTVEGPCEAQLECLDNGDGTCSVSYVPTEPGDYNINILFADTHIPGSPFKAHVAPCFDASKVKCSGPGLERATAGEVGQFQVDCSSAGSAELTIEICSEAGLPAEVYIQDHGDGTHTITYIPLCPGAYTVTIKYGGQPVPNFPSKLQVEPAVDTSGVQCYGPGIEGQGVFREATTEFSVDARALTQTGGPHVKARVANPSGNLTDTYVQDCGDGTYKVEYTPYEEGVHSVDVTYDGSPVPSSPFQVPVTEGCDPSRVRVHGPGIQSGTTNKPNKFTVETRGAGTGGLGLAVEGPSEAKMSCMDNKDGSCSVEYIPYEAGTYSLNVTYGGHQVPGSPFKVPVHDVTDASKVKCSGPGLSPGMVRANLPQSFQVDTSKAGVAPLQVKVQGPKGLVEPVDVVDNADGTQTVNYVPSREGSYSISVLYGEEEVPRSPFKVKVLPTHDASKVKASGPGLNTTGVPASLPVEFTIDAKDAGEGLLAVQITDPEGKPKKTHIQDNHDGTYTVAYVPDVPGRYTILIKYGGDEIPFSPYRVRAVPTGDASKCTVTVSIGGHGLGAGIGPTIQIGEETVITVDTKAAGKGKVTCTVCTPDGSEVDVDVVENEDGTFDIFYTAPQPGKYVICVRFGGEHVPNSPFQVTALAGDQPTVQTPLRSQQLAPQYNYPQGSQQTWIPERPMVGVNGLDVTSLRPFDLVIPFTIKKGEITGEVRMPSGKVAQPSITDNKDGTVTVRYSPSEAGLHEMDIRYDNMHIPGSPLQFYVDYVNCGHITAYGPGLTHGVVNKPATFTVNTKDAGEGGLSLAIEGPSKAEISCTDNQDGTCSVSYLPVLPGDYSILVKYNDQHIPGSPFTARVTGDDSMRMSHLKVGSAADIPINISETDLSLLTATVVPPSGREEPCLLKRLRNGHVGISFVPKETGEHLVHVKKNGQHVASSPIPVVISQSEIGDASRVRVSGQGLHEGHTFEPAEFIIDTRDAGYGGLSLSIEGPSKVDINTEDLEDGTCRVTYCPTEPGNYIINIKFADQHVPGSPFSVKVTGEGRVKESITRRRRAPSVANIGSHCDLSLKIPEISIQDMTAQVTSPSGKTHEAEIVEGENHTYCIRFVPAEMGMHTVSVKYKGQHVPGSPFQFTVGPLGEGGAHKVRAGGPGLERAEVGVPAEFGIWTREAGAGGLAIAVEGPSKAEISFEDRKDGSCGVAYVVQEPGDYEVSVKFNEEHIPDSPFVVPVASPSGDARRLTVSSLQESGLKVNQPASFAVSLNGAKGAIDAKVHSPSGALEECYVTEIDQDKYAVRFIPRENGIYLIDVKFNGTHIPGSPFKIRVGEPGHGGDPGLVSAYGAGLEGGVTGSPAEFIVNTSNAGAGALSVTIDGPSKVKMDCQECPEGYRVTYTPMAPGSYLISIKYGGPYHIGGSPFKAKVTGPRLVSNHSLHETSSVFVDSLTKVATVPQHATSGPGPADVSKVVAKGLGLSKAYVGQKSNFTVDCSKAGNNMLLVGVHGPRTPCEEILVKHMGSRLYSVSYLLKDKGEYTLVVKWGDEHIPGSPYRIMVP.

Positions 1-37 (MSSSHSRCGQSAAVASPGGSIDSRDAEMPATEKDLAE) are disordered. Ser-2 bears the N-acetylserine mark. The tract at residues 2 to 274 (SSSHSRCGQS…PKAKLKPGAP (273 aa)) is actin-binding. Phosphoserine is present on residues Ser-11, Ser-16, and Ser-20. A compositionally biased stretch (basic and acidic residues) spans 22-37 (DSRDAEMPATEKDLAE). Glycyl lysine isopeptide (Lys-Gly) (interchain with G-Cter in ubiquitin) cross-links involve residues Lys-42, Lys-43, and Lys-135. 2 Calponin-homology (CH) domains span residues 43–149 (KIQQ…LHYS) and 166–269 (QTPK…KAKL). The disordered stretch occupies residues 271–294 (PGAPLRPKLNPKKARAYGPGIEPT). Filamin repeat units lie at residues 276 to 374 (RPKL…EVYV), 376 to 474 (KSQG…TVTV), 475 to 570 (GQAC…EVKV), 571 to 663 (GTEC…MADI), 667 to 763 (PQDF…RVNV), 764 to 866 (GAGS…RVKV), 867 to 965 (EPSH…SVGV), 966 to 1061 (SPSL…PLEA), 1062 to 1154 (VAPT…KAHV), 1155 to 1249 (APCF…KLQV), 1250 to 1349 (EPAV…QVPV), 1350 to 1442 (TEGC…KVPV), 1443 to 1539 (HDVT…KVKV), 1540 to 1636 (LPTH…RVRA), and 1641 to 1740 (DASK…QVTA). Lys-299 participates in a covalent cross-link: Glycyl lysine isopeptide (Lys-Gly) (interchain with G-Cter in SUMO1); alternate. Lys-299 is covalently cross-linked (Glycyl lysine isopeptide (Lys-Gly) (interchain with G-Cter in SUMO2); alternate). N6-acetyllysine occurs at positions 376 and 508. N6-acetyllysine occurs at positions 700, 781, 837, 865, and 906. Residues Ser-968 and Ser-1055 each carry the phosphoserine modification. Lys-1071 is subject to N6-acetyllysine; alternate. At Lys-1071 the chain carries N6-succinyllysine; alternate. Residue Ser-1084 is modified to Phosphoserine. Thr-1089 is subject to Phosphothreonine. 2 positions are modified to phosphoserine: Ser-1301 and Ser-1338. Lys-1372 is modified (N6-acetyllysine). 2 positions are modified to phosphoserine: Ser-1459 and Ser-1533. Positions 1490 to 1607 (PKGLVEPVDV…DNHDGTYTVA (118 aa)) are interaction with furin. Position 1538 is an N6-acetyllysine (Lys-1538). A phosphoserine mark is found at Ser-1630 and Ser-1734. The segment at 1741–1778 (LAGDQPTVQTPLRSQQLAPQYNYPQGSQQTWIPERPMV) is hinge 1. Thr-1750 carries the post-translational modification Phosphothreonine. Filamin repeat units lie at residues 1765–1860 (QGSQ…QFYV), 1861–1952 (DYVN…TARV), 1953–2039 (TGDD…PVVI), 2042–2134 (SEIG…SVKV), 2135–2230 (TGEG…QFTV), 2233–2325 (LGEG…VVPV), 2327–2420 (SPSG…KIRV), and 2424–2516 (GHGG…KAKV). Ser-1835 is subject to Phosphoserine. Phosphoserine occurs at positions 1967, 2053, 2128, 2152, 2158, 2163, 2180, 2284, 2327, and 2329. Thr-2336 carries the post-translational modification Phosphothreonine. Phosphoserine occurs at positions 2338, 2370, 2414, 2510, 2523, and 2526. A hinge 2 region spans residues 2517-2553 (TGPRLVSNHSLHETSSVFVDSLTKVATVPQHATSGPG). A self-association site, tail region spans residues 2517–2647 (TGPRLVSNHS…PGSPYRIMVP (131 aa)). Residues 2552–2646 (PGPADVSKVV…IPGSPYRIMV (95 aa)) form a Filamin 24 repeat. Lys-2569 carries the N6-acetyllysine; alternate modification. Residue Lys-2569 is modified to N6-succinyllysine; alternate. Residue Lys-2575 is modified to N6-acetyllysine. Thr-2599 is modified (phosphothreonine). N6-acetyllysine is present on residues Lys-2607 and Lys-2621.

It belongs to the filamin family. Homodimer. Interacts with FCGR1A, FLNB, FURIN, HSPB7, KCND2, INPPL1, MYOT, MYOZ1, PDLIM2, ARHGAP24, PSEN1, PSEN2 and ECSCR. Also interacts with various other binding partners in addition to filamentous actin. Interacts (via N-terminus) with TAF1B. Interacts (via N-terminus) with MIS18BP1 (via N-terminus). Interacts with TMEM67 (via C-terminus) and MKS1. Interacts (via actin-binding domain) with MICALL2 (via calponin-homology (CH) domain). Interacts with RFLNA and RFLNB. Interacts (via filamin repeat 5) with SYK; docks SYK to the plasma membrane. Interacts (via filamin repeats 19 and 21) with DRD3; increased PKA-mediated phosphorylation at Ser-2152. Interacts (via filamin repeat 21) with MAS1, AGTR1 and ADRA1D; increases PKA-mediated phosphorylation of FLNA at Ser-2152. Interacts (via filamin repeats 4, 9, 12, 17, 19, 21, and 23) with GP1BA (high affinity), ITGB7, ITGB2 and FBLIM1. Interacts with CEACAM1 (via cytoplasmic domain); inhibits cell migration and cell scattering by interfering with the interaction between FLNA and RALA. Interacts with FOXC1. Interacts (via calponin-homology (CH) domain 1 and filamin repeat 24) with CRMP1; the interaction alters FLNA ternary structure and thus promotes FLNA dissociation from F-actin. Interacts with DPYSL3/CRMP3 and DPYSL4/CRMP4. Post-translationally, phosphorylation at Ser-2152 is negatively regulated by the autoinhibited conformation of filamin repeats 19-21. Ligand binding induces a conformational switch triggering phosphorylation at Ser-2152 by PKA. In terms of processing, polyubiquitination in the CH1 domain by a SCF-like complex containing ASB2 leads to proteasomal degradation. Prior dissociation from actin may be required to expose the target lysines. Ubiquitinated in endothelial cells by RNF213 downstream of the non-canonical Wnt signaling pathway, leading to its degradation by the proteasome. As to expression, widely expressed. Highly expressed in Purkinje cells.

The protein resides in the cytoplasm. The protein localises to the cell cortex. It localises to the cytoskeleton. Its subcellular location is the perikaryon. It is found in the cell projection. The protein resides in the growth cone. The protein localises to the podosome. Functionally, actin binding protein that promotes orthogonal branching of actin filaments and links actin filaments to membrane glycoproteins. Anchors various transmembrane proteins to the actin cytoskeleton and serves as a scaffold for a wide range of cytoplasmic signaling proteins. Interaction with FLNB may allow neuroblast migration from the ventricular zone into the cortical plate. Tethers cell surface-localized furin, modulates its rate of internalization and directs its intracellular trafficking. Involved in ciliogenesis. Plays a role in cell-cell contacts and adherens junctions during the development of blood vessels, heart and brain organs. Plays a role in platelets morphology through interaction with SYK that regulates ITAM- and ITAM-like-containing receptor signaling, resulting in by platelet cytoskeleton organization maintenance. During the axon guidance process, required for growth cone collapse induced by SEMA3A-mediated stimulation of neurons. The sequence is that of Filamin-A (Flna) from Mus musculus (Mouse).